We begin with the raw amino-acid sequence, 55 residues long: Large ribosomal subunit protein bL33 (55 aa).

This sequence belongs to the bacterial ribosomal protein bL33 family.

The polypeptide is Large ribosomal subunit protein bL33 (Bradyrhizobium sp. (strain BTAi1 / ATCC BAA-1182)).